The sequence spans 179 residues: Large ribosomal subunit protein uL5 (179 aa).

Belongs to the universal ribosomal protein uL5 family. Part of the 50S ribosomal subunit; part of the 5S rRNA/L5/L18/L25 subcomplex. Contacts the 5S rRNA and the P site tRNA. Forms a bridge to the 30S subunit in the 70S ribosome.

Its function is as follows. This is one of the proteins that bind and probably mediate the attachment of the 5S RNA into the large ribosomal subunit, where it forms part of the central protuberance. In the 70S ribosome it contacts protein S13 of the 30S subunit (bridge B1b), connecting the 2 subunits; this bridge is implicated in subunit movement. Contacts the P site tRNA; the 5S rRNA and some of its associated proteins might help stabilize positioning of ribosome-bound tRNAs. The sequence is that of Large ribosomal subunit protein uL5 from Serratia proteamaculans (strain 568).